Here is a 702-residue protein sequence, read N- to C-terminus: MSRKLIKYLPLLVLASSVLSGCSNNVSSIKIDRFNNISAVNGPGEEDTWASAQKQGVGTANNYVSKVWFTLANGAISEVYYPTIDTADVKEIKFIVTDGKSFVSDETKDTISKVEKFTDKSLGYKLVNTDKKGRYRITKEIFTDVKRNSLIMKAKFEALEGSIHDYKLYLAYDPHIKNQGSYNEGYVIKANNNEMLMAKRDNVYTALSSNIGWKGYSIGYYKVNDIMTDLDENKQMTKHYDSARGNIIEGAEIDLKKNSQFEIVLSFGNSEDEAVKASIETLSENYDSLKSAYIDEWEKYCNSLNNFNGKANSLYYNSMMILKASEDKTNKGAYIASLSIPWGDGQGDDNTGGYHLVWSRDLYHVANAFIAAGDVDSANRSLDYLAKVVKDNGMIPQNTWISGKPYWTGIQLDEQADPIILSYRLRRYDLYDSLVKPLADFIIKMGPKTGQERWEEIGGYSPATMAAEVAGLTCAAYIAEQNKDYESAQKYQEKADNWQKLIDNLTYTEHGPLENGQYYIRIAGLPDPNADFTISIANGGGVYDQKEIVDPSFLELVRLGVKSPDDPKILNTLRVVDSTIKVDTPKGPSWYRYNHDGYGEPSKTELYHGAGKGRLWPLLTGERGMYEIAAGKDATPYLKAMENFANEGGIISEQVWEDTGLPTDSASPLNWAHAEYVVLFPSNIEHKVLDMPDIVYKRYVAK.

An N-terminal signal peptide occupies residues 1–21 (MSRKLIKYLPLLVLASSVLSG). C22 carries the N-palmitoyl cysteine lipid modification. C22 carries S-diacylglycerol cysteine lipidation. W342 is a binding site for substrate. E452 acts as the Proton acceptor in catalysis. E455 functions as the Proton donor in the catalytic mechanism.

It belongs to the glycosyl hydrolase 15 family.

Its subcellular location is the cell membrane. It catalyses the reaction Hydrolysis of terminal (1-&gt;4)-linked alpha-D-glucose residues successively from non-reducing ends of the chains with release of beta-D-glucose.. Its function is as follows. CGA has typical kinetic properties for a glucoamylase, but this bacterial enzyme had higher isomaltose-hydrolyzing activity than other eukaryotic glucoamylases. This is Glucoamylase (cga) from Clostridium sp. (strain G0005).